A 138-amino-acid polypeptide reads, in one-letter code: Acidic phospholipase A2 5 (138 aa).

The first 16 residues, 1-16 (MRTLWIVAVWLIGVEG), serve as a signal peptide directing secretion. Intrachain disulfides connect C42–C131, C44–C60, C59–C111, C65–C138, C66–C104, C73–C97, and C91–C102. Residues Y43, G45, and G47 each contribute to the Ca(2+) site. The active site involves H63. D64 serves as a coordination point for Ca(2+). Residue D105 is part of the active site.

It belongs to the phospholipase A2 family. Group II subfamily. D49 sub-subfamily. Ca(2+) serves as cofactor. Expressed by the venom gland.

Its subcellular location is the secreted. The catalysed reaction is a 1,2-diacyl-sn-glycero-3-phosphocholine + H2O = a 1-acyl-sn-glycero-3-phosphocholine + a fatty acid + H(+). Functionally, PLA2 catalyzes the calcium-dependent hydrolysis of the 2-acyl groups in 3-sn-phosphoglycerides. This chain is Acidic phospholipase A2 5, found in Echis ocellatus (Ocellated saw-scaled viper).